The chain runs to 161 residues: Small ribosomal subunit protein uS19 (161 aa).

Over residues 1–19 (MARQKKYSGKGGARKKNKQ) the composition is skewed to basic residues. The segment at 1–26 (MARQKKYSGKGGARKKNKQKQNVAPR) is disordered.

The protein belongs to the universal ribosomal protein uS19 family.

Protein S19 forms a complex with S13 that binds strongly to the 16S ribosomal RNA. This chain is Small ribosomal subunit protein uS19, found in Methanococcus maripaludis (strain C5 / ATCC BAA-1333).